A 450-amino-acid polypeptide reads, in one-letter code: F-box protein KIB3 (450 aa).

The region spanning 20-50 is the F-box domain; it reads DLVRLILERLSFVDFHRARCVSSTWYVASKS.

The protein resides in the cytoplasm. It is found in the nucleus. Its subcellular location is the nucleolus. Functionally, component of SCF(ASK-cullin-F-box) E3 ubiquitin ligase complexes, which may mediate the ubiquitination and subsequent proteasomal degradation of target proteins. Required for brassinosteroid (BR) signal transduction. Mediates ASK7/BIN2/SK21 inactivation both by competing with substrate binding (e.g. BZR1) and by promoting its ubiquitination and subsequent proteasomal degradation. The sequence is that of F-box protein KIB3 from Arabidopsis thaliana (Mouse-ear cress).